A 462-amino-acid chain; its full sequence is UDP-N-acetylmuramoylalanine--D-glutamate ligase (462 aa).

111–117 (GTNGKTT) lines the ATP pocket.

The protein belongs to the MurCDEF family.

Its subcellular location is the cytoplasm. It catalyses the reaction UDP-N-acetyl-alpha-D-muramoyl-L-alanine + D-glutamate + ATP = UDP-N-acetyl-alpha-D-muramoyl-L-alanyl-D-glutamate + ADP + phosphate + H(+). It functions in the pathway cell wall biogenesis; peptidoglycan biosynthesis. Cell wall formation. Catalyzes the addition of glutamate to the nucleotide precursor UDP-N-acetylmuramoyl-L-alanine (UMA). This Trichodesmium erythraeum (strain IMS101) protein is UDP-N-acetylmuramoylalanine--D-glutamate ligase.